Reading from the N-terminus, the 93-residue chain is SH3 domain-binding glutamic acid-rich-like protein 3 (93 aa).

Position 2 is an N-acetylserine (serine 2). The 92-residue stretch at 2–93 folds into the Glutaredoxin domain; sequence SGLRVYSTSV…NTLQEFLKLA (92 aa). An O-linked (GalNAc...) threonine glycan is attached at threonine 9.

The protein belongs to the SH3BGR family. Homodimer. Interacts with MYO1C (via its IQ motifs); the interaction is dependent on calcium and takes place at membrane ruffles. May be glycosylated.

The protein localises to the cytoplasm. Its subcellular location is the cytosol. It localises to the cell projection. It is found in the ruffle membrane. The protein resides in the nucleus. Its function is as follows. Could act as a modulator of glutaredoxin biological activity. May play a role in cytoskeleton organization. The protein is SH3 domain-binding glutamic acid-rich-like protein 3 (SH3BGRL3) of Bos taurus (Bovine).